The chain runs to 175 residues: Small ribosomal subunit protein uS5 (175 aa).

Positions 19 to 82 (WVDRLVSVNR…DDAKKNVIRV (64 aa)) constitute an S5 DRBM domain.

Belongs to the universal ribosomal protein uS5 family. Part of the 30S ribosomal subunit. Contacts proteins S4 and S8.

With S4 and S12 plays an important role in translational accuracy. In terms of biological role, located at the back of the 30S subunit body where it stabilizes the conformation of the head with respect to the body. This chain is Small ribosomal subunit protein uS5, found in Salinibacter ruber (strain DSM 13855 / M31).